Reading from the N-terminus, the 174-residue chain is Adenylate kinase (174 aa).

Residues Ser12 to Val41 are NMP. AMP is bound by residues Thr13, Arg18, Gly39–Val41, Gly67–Arg70, and Gln74. Residues Gly104–Asp141 are LID. ATP contacts are provided by residues Arg105 and Thr114–Tyr115. AMP is bound by residues Arg138 and Arg149.

Belongs to the adenylate kinase family. As to quaternary structure, monomer.

The protein resides in the cytoplasm. It carries out the reaction AMP + ATP = 2 ADP. The protein operates within purine metabolism; AMP biosynthesis via salvage pathway; AMP from ADP: step 1/1. Its function is as follows. Catalyzes the reversible transfer of the terminal phosphate group between ATP and AMP. Plays an important role in cellular energy homeostasis and in adenine nucleotide metabolism. This is Adenylate kinase from Neisseria cinerea.